The following is a 233-amino-acid chain: Synaptogyrin-4 (233 aa).

The MARVEL domain maps to 18-169; the sequence is FLRRPKSISR…QAYLAFQDLR (152 aa). The next 4 helical transmembrane spans lie at 25–45, 66–86, 104–124, and 145–165; these read ISRI…LTDG, CSFA…FLAI, LLDF…FCFL, and AAIA…YLAF. The segment at 191-233 is disordered; sequence SPSSTSPSNPPITGPNSLSYTSSALSPYMTTPKAPRLAMMPDS. Residues 204-219 are compositionally biased toward polar residues; the sequence is GPNSLSYTSSALSPYM.

Belongs to the synaptogyrin family.

The protein localises to the membrane. The polypeptide is Synaptogyrin-4 (Syngr4) (Mus musculus (Mouse)).